The sequence spans 98 residues: Integration host factor subunit beta (98 aa).

Belongs to the bacterial histone-like protein family. In terms of assembly, heterodimer of an alpha and a beta chain.

In terms of biological role, this protein is one of the two subunits of integration host factor, a specific DNA-binding protein that functions in genetic recombination as well as in transcriptional and translational control. This chain is Integration host factor subunit beta, found in Marinobacter nauticus (strain ATCC 700491 / DSM 11845 / VT8) (Marinobacter aquaeolei).